We begin with the raw amino-acid sequence, 191 residues long: Protein YceI (191 aa).

The N-terminal stretch at 1 to 22 is a signal peptide; the sequence is MKKNLLGFTLASLLFTTGSAVA.

This sequence belongs to the UPF0312 family. Type 1 subfamily.

The protein localises to the periplasm. This chain is Protein YceI, found in Salmonella newport (strain SL254).